The sequence spans 462 residues: Ubiquitin carboxyl-terminal hydrolase calypso (462 aa).

In terms of domain architecture, UCH catalytic spans 29-260 (GWLELESDPG…IRFNLMAVVP (232 aa)). The active-site Nucleophile is the C115. H197 functions as the Proton donor in the catalytic mechanism. The ULD domain occupies 357–385 (NYDKFICTFLTMLAHQGVLGELVSQHLLP). The positively charged C-terminal tail required for binding nucleosomes stretch occupies residues 387-462 (KKISGQSAAN…KGRNKCRKRK (76 aa)). Positions 394–462 (AANRLNKQNS…KGRNKCRKRK (69 aa)) are disordered. Low complexity predominate over residues 399-447 (NKQNSAAASTANSSAGATAGGAKSQQQQQQQQQPQQPQTPKNGKSPGKT). A compositionally biased stretch (basic residues) spans 448–462 (PGRRRKGRNKCRKRK).

This sequence belongs to the peptidase C12 family. BAP1 subfamily. As to quaternary structure, catalytic component of the polycomb repressive deubiquitinase (PR-DUB) complex, at least composed of caly/calypso, Asx and sba (MBD5/6 homolog). The PR-DUB complex associates with nucleosomes to mediate deubiquitination of histone H2AK118ub1 substrates; the association requires the positively charged C-terminal tail of caly, probably due to direct binding of DNA. Interacts (via ULD domain) with Asx (via DEUBAD domain); the interaction produces a stable heterodimer with a composite binding site for ubiquitin. Homodimerizes (via coiled-coil hinge-region between the UCH and ULD domains) to mediate assembly of 2 copies of the caly-Asx heterodimer into a bisymmetric tetramer; dimerization enhances PR-DUB association with nucleosomes.

It is found in the nucleus. It catalyses the reaction Thiol-dependent hydrolysis of ester, thioester, amide, peptide and isopeptide bonds formed by the C-terminal Gly of ubiquitin (a 76-residue protein attached to proteins as an intracellular targeting signal).. In terms of biological role, catalytic component of the polycomb repressive deubiquitinase (PR-DUB) complex, a complex that specifically mediates deubiquitination of histone H2A monoubiquitinated at 'Lys-119' (H2AK118ub1). Mediates bisymmetric organization of the PR-DUB complex and is involved in association with nucleosomes to mediate deubiquitination. Does not deubiquitinate monoubiquitinated histone H2B. Required to maintain the transcriptionally repressive state of homeotic genes throughout development. The PR-DUB complex has weak or no activity toward 'Lys-48'- and 'Lys-63'-linked polyubiquitin chains. Polycomb group (PcG) protein. This is Ubiquitin carboxyl-terminal hydrolase calypso from Drosophila virilis (Fruit fly).